Reading from the N-terminus, the 481-residue chain is Putative F-box/FBD/LRR-repeat protein At5g25850 (481 aa).

In terms of domain architecture, F-box spans 19–69 (INRLSQLSDPLICQILSHLPIKEVVTTSVLSTRWKNIWLSVPSLELIYSIF). LRR repeat units follow at residues 123-151 (VRRV…KLFH), 173-198 (VWFP…KIDV), and 328-356 (HVTL…IVAF). The 52-residue stretch at 401-452 (QLSFSSVPKCLLSSLQFVELNAQILRFDGEILNLAKYFLENSSILQKLTLHP) folds into the FBD domain.

The chain is Putative F-box/FBD/LRR-repeat protein At5g25850 from Arabidopsis thaliana (Mouse-ear cress).